A 780-amino-acid chain; its full sequence is E3 SUMO-protein ligase gei-17 (780 aa).

The segment at 181-210 (APLHSSFPNHGRSSQQSLQKSEKSNRPKKM) is disordered. The PINIT domain maps to 203–367 (KSNRPKKMYA…AAGVYFVHRV (165 aa)). An SP-RING-type zinc finger spans residues 400–485 (GEDDIAMDRL…LAKVDKNTTE (86 aa)). Zn(2+) contacts are provided by Cys-431, His-433, Cys-454, and Cys-457. A compositionally biased stretch (polar residues) spans 519-530 (GTASCSSTNGNG). Disordered regions lie at residues 519-544 (GTAS…ADDD), 560-594 (IMNS…KTKD), and 732-755 (QQHH…SFYA). Residues 732–749 (QQHHLQQQQQQQQSPQIM) show a composition bias toward low complexity.

This sequence belongs to the PIAS family. May interact with gex-3.

It participates in protein modification; protein sumoylation. In terms of biological role, functions as an E3-type smo-1 ligase. Mediates smo-1 conjugation to air-2 in vitro and is required for proper chromosome alignment. In the early embryo, specifically suppresses checkpoint activation in response to DNA damage, maybe by promoting mus-101 sumoylation. In embryos, plays a role in determining telomere localization in the nucleus. Acts with pie-1 to promote piRNA-mediated silencing and fertility in the adult germline. This Caenorhabditis elegans protein is E3 SUMO-protein ligase gei-17.